A 333-amino-acid polypeptide reads, in one-letter code: MNKLTTIESHFLQLQKRYPEINSEVTDLLNDVAFAAKLVRREVVRAGLADILGLAGSTNVQGEEVKKLDLFANERLINAIGQHGRFAIMGSEENEEIIKPPKFESGEYVLLFDPLDGSSNIDVNVSVGTIFSIYRLKSGEPSQASLEDCLQKGADQIAAGYVIYGSSVMMVYTTGHGVHGFTYDQTVGEFLLSHENITTPEHGKYYSVNEGSWQEFNDGTKRFLDYLKEEDKATGRPYSTRYIGSFVADFHRNLLTGGVFVYPATKKHKNGKLRLMYEANPMAFICEQAGGRATDGYRRILDIEPKELHQRTPLYIGSKNDVLIAEEFEQGKR.

Mg(2+) is bound by residues E92, D113, L115, and D116. Substrate contacts are provided by residues 116 to 119, N209, Y242, and K272; that span reads DGSS. E278 contributes to the Mg(2+) binding site.

The protein belongs to the FBPase class 1 family. In terms of assembly, homotetramer. It depends on Mg(2+) as a cofactor.

The protein resides in the cytoplasm. It carries out the reaction beta-D-fructose 1,6-bisphosphate + H2O = beta-D-fructose 6-phosphate + phosphate. It functions in the pathway carbohydrate biosynthesis; Calvin cycle. The protein is Fructose-1,6-bisphosphatase class 1 of Chlorobaculum tepidum (strain ATCC 49652 / DSM 12025 / NBRC 103806 / TLS) (Chlorobium tepidum).